Here is a 541-residue protein sequence, read N- to C-terminus: Chaperonin GroEL 2 (541 aa).

Residues 30 to 33 (TLGP), K51, 87 to 91 (DGTTT), G415, and D496 contribute to the ATP site.

Belongs to the chaperonin (HSP60) family. As to quaternary structure, forms a cylinder of 14 subunits composed of two heptameric rings stacked back-to-back. Interacts with the co-chaperonin GroES.

It localises to the cytoplasm. It carries out the reaction ATP + H2O + a folded polypeptide = ADP + phosphate + an unfolded polypeptide.. Its function is as follows. Together with its co-chaperonin GroES, plays an essential role in assisting protein folding. The GroEL-GroES system forms a nano-cage that allows encapsulation of the non-native substrate proteins and provides a physical environment optimized to promote and accelerate protein folding. The chain is Chaperonin GroEL 2 from Gluconacetobacter diazotrophicus (strain ATCC 49037 / DSM 5601 / CCUG 37298 / CIP 103539 / LMG 7603 / PAl5).